The following is a 369-amino-acid chain: 3-dehydroquinate synthase (369 aa).

Residues 78–83 (DGERYK), 112–116 (GVIGD), 136–137 (TT), K149, K158, and 176–179 (TLTT) contribute to the NAD(+) site. E191, H254, and H271 together coordinate Zn(2+).

Belongs to the sugar phosphate cyclases superfamily. Dehydroquinate synthase family. NAD(+) is required as a cofactor. Co(2+) serves as cofactor. It depends on Zn(2+) as a cofactor.

The protein resides in the cytoplasm. It carries out the reaction 7-phospho-2-dehydro-3-deoxy-D-arabino-heptonate = 3-dehydroquinate + phosphate. It functions in the pathway metabolic intermediate biosynthesis; chorismate biosynthesis; chorismate from D-erythrose 4-phosphate and phosphoenolpyruvate: step 2/7. In terms of biological role, catalyzes the conversion of 3-deoxy-D-arabino-heptulosonate 7-phosphate (DAHP) to dehydroquinate (DHQ). The protein is 3-dehydroquinate synthase of Nitrosomonas europaea (strain ATCC 19718 / CIP 103999 / KCTC 2705 / NBRC 14298).